The primary structure comprises 975 residues: Ubiquitin C-terminal hydrolase 15 (975 aa).

Residues C88, C91, C99, C102, C108, C112, H121, and C125 each contribute to the Zn(2+) site. The segment at 88–125 (CATCHGPAKTRCSRCKSVRYCSGKCQIIHWRQGHKQTC) adopts an MYND-type zinc-finger fold. The tract at residues 301–378 (EGPYASAAES…STKTAVSTNS (78 aa)) is disordered. Over residues 309 to 322 (ESLQRSNSSGNVTG) the composition is skewed to polar residues. The segment covering 354–369 (YDGHEKNPHNKNEQRS) has biased composition (basic and acidic residues). A USP domain is found at 441–747 (RGLFNCGNSC…GAYMLFYMRS (307 aa)). C450 (nucleophile) is an active-site residue. Residue H706 is the Proton acceptor of the active site. The segment at 764–783 (PTCSKRHSSKSSKGSKQDLN) is disordered.

Belongs to the peptidase C19 family. As to expression, highly expressed in young panicles. Expressed in roots, leaf blades, leaf sheaths and stems. Expressed at low levels in brown grains.

The protein resides in the cytoplasm. The protein localises to the nucleus. The enzyme catalyses Thiol-dependent hydrolysis of ester, thioester, amide, peptide and isopeptide bonds formed by the C-terminal Gly of ubiquitin (a 76-residue protein attached to proteins as an intracellular targeting signal).. Functionally, recognizes and hydrolyzes the peptide bond at the C-terminal Gly of ubiquitin. Involved in the processing of poly-ubiquitin precursors as well as that of ubiquitinated proteins. Involved in the regulation of grain size. Acts as positive regulator of grain width and size by influencing cell proliferation. Functions partially antagonistically with GW2 in the regulation of grain width. Possesses deubiquitinating enzyme activity in vitro. The protein is Ubiquitin C-terminal hydrolase 15 of Oryza sativa subsp. japonica (Rice).